Here is a 614-residue protein sequence, read N- to C-terminus: Sulfite reductase [NADPH] flavoprotein alpha-component (614 aa).

In terms of domain architecture, Flavodoxin-like spans 79 to 217; sequence LTIIFASQTG…AATEWRKQVL (139 aa). Residues 85–90, 132–135, and 168–177 each bind FMN; these read SQTGNA, STNG, and LGDSSYQFFC. In terms of domain architecture, FAD-binding FR-type spans 249 to 463; that stretch reads EQPYTASLST…VEHNNNFKLP (215 aa). FAD is bound by residues T337, T371, 401-404, 419-421, Y425, and 434-437; these read RLYS, TVG, and GGAS. NADP(+)-binding positions include 534–535, 540–544, and D576; these read SR and KVYVQ. Residue Y614 participates in FAD binding.

The protein belongs to the NADPH-dependent sulphite reductase flavoprotein subunit CysJ family. This sequence in the N-terminal section; belongs to the flavodoxin family. It in the C-terminal section; belongs to the flavoprotein pyridine nucleotide cytochrome reductase family. In terms of assembly, alpha(8)-beta(8). The alpha component is a flavoprotein, the beta component is a hemoprotein. The cofactor is FAD. FMN serves as cofactor.

It catalyses the reaction hydrogen sulfide + 3 NADP(+) + 3 H2O = sulfite + 3 NADPH + 4 H(+). The protein operates within sulfur metabolism; hydrogen sulfide biosynthesis; hydrogen sulfide from sulfite (NADPH route): step 1/1. In terms of biological role, component of the sulfite reductase complex that catalyzes the 6-electron reduction of sulfite to sulfide. This is one of several activities required for the biosynthesis of L-cysteine from sulfate. The flavoprotein component catalyzes the electron flow from NADPH -&gt; FAD -&gt; FMN to the hemoprotein component. The sequence is that of Sulfite reductase [NADPH] flavoprotein alpha-component from Vibrio cholerae serotype O1 (strain ATCC 39541 / Classical Ogawa 395 / O395).